The chain runs to 340 residues: Ubiquitin-like domain-containing CTD phosphatase (340 aa).

The Ubiquitin-like domain maps to 24-101 (LTLTVKWNGK…MTMIGTVEDD (78 aa)). An FCP1 homology domain is found at 151-312 (CRQGKKLLVL…VKLTQYLLTI (162 aa)). Residues 151–312 (CRQGKKLLVL…VKLTQYLLTI (162 aa)) are phosphatase. Asp-161, Asp-163, and Asp-271 together coordinate Mg(2+).

Requires Mg(2+) as cofactor.

Its subcellular location is the nucleus. The catalysed reaction is O-phospho-L-seryl-[protein] + H2O = L-seryl-[protein] + phosphate. It carries out the reaction O-phospho-L-threonyl-[protein] + H2O = L-threonyl-[protein] + phosphate. Its function is as follows. Dephosphorylates 26S nuclear proteasomes, thereby decreasing their proteolytic activity. The dephosphorylation may prevent assembly of the core and regulatory particles (CP and RP) into mature 26S proteasome. This is Ubiquitin-like domain-containing CTD phosphatase from Arabidopsis thaliana (Mouse-ear cress).